We begin with the raw amino-acid sequence, 698 residues long: ATP-dependent RNA helicase DHX33 (698 aa).

Disordered regions lie at residues 1-20 (MPEE…SCPP) and 29-50 (TAGG…AQPS). Residues 1–71 (MPEEASLPPA…RRSLPIFRAR (71 aa)) are required for nucleolar location. The segment covering 30-40 (AGGGGGAGGGR) has biased composition (gly residues). The 169-residue stretch at 75–243 (LAQLRNLDNA…FNRAPVLYLE (169 aa)) folds into the Helicase ATP-binding domain. Position 88–95 (88–95 (GETGSGKT)) interacts with ATP. The short motif at 185-188 (DEAH) is the DEAH box element. Residues 271-441 (QIHQEAPASQ…SVILQLLAMK (171 aa)) enclose the Helicase C-terminal domain. An HA2; required for interaction with EIF3G and RPL26 region spans residues 462-553 (AIAQLDLLGA…ISSEGDHITL (92 aa)). The Critical for rDNA-binding signature appears at 536–550 (VQSVRKKFISSEGDH).

Belongs to the DEAD box helicase family. DEAH subfamily. Interacts with UBTF. Interacts with DDX3X, EIF3G and EIF3H; the interaction is independent of RNA. Interacts (via HA2 region and Helicase C-terminal domain) with the components of the large ribosomal subunit RPL3, RPL7, RPL26 and RPL27. Binds to mRNA. Interacts (via the helicase C-terminal domain) with MAVS. Binds to double-stranded RNA (via the helicase C-terminal domain). Ubiquitinated, leading to its degradation by the proteasome. Deubiquitinated by USP36.

The protein resides in the nucleus. It is found in the nucleolus. The protein localises to the nucleoplasm. It localises to the cytoplasm. Its subcellular location is the inflammasome. The catalysed reaction is ATP + H2O = ADP + phosphate + H(+). Implicated in nucleolar organization, ribosome biogenesis, protein synthesis and cytoplasmic dsRNA sensing. Stimulates RNA polymerase I transcription of the 47S precursor rRNA. Associates with ribosomal DNA (rDNA) loci where it is involved in POLR1A recruitment. In the cytoplasm, promotes elongation-competent 80S ribosome assembly at the late stage of mRNA translation initiation. Senses cytosolic dsRNA mediating NLRP3 inflammasome formation in macrophages and type I interferon production in myeloid dendritic cells. Required for NLRP3 activation induced by viral dsRNA and bacterial RNA. In dendritic cells, required for induction of type I interferon production induced by cytoplasmic dsRNA via the activation of MAPK and NF-kappa-B signaling pathways. This is ATP-dependent RNA helicase DHX33 from Mus musculus (Mouse).